The chain runs to 170 residues: Probable chemoreceptor glutamine deamidase CheD 3 (170 aa).

It belongs to the CheD family.

It catalyses the reaction L-glutaminyl-[protein] + H2O = L-glutamyl-[protein] + NH4(+). Probably deamidates glutamine residues to glutamate on methyl-accepting chemotaxis receptors (MCPs), playing an important role in chemotaxis. The sequence is that of Probable chemoreceptor glutamine deamidase CheD 3 from Dechloromonas aromatica (strain RCB).